A 38-amino-acid polypeptide reads, in one-letter code: Zinc-containing ferredoxin (38 aa).

The span at 1 to 11 (GIDPNFRTSRP) shows a compositional bias: polar residues. Positions 1–38 (GIDPNFRTSRPVTGDHAGHKVYAPADPPVKEKALGIHG) are disordered. The N-terminal extension stretch occupies residues 1-38 (GIDPNFRTSRPVTGDHAGHKVYAPADPPVKEKALGIHG). Zn(2+)-binding residues include H16 and H19. Residues 28–38 (PVKEKALGIHG) show a composition bias toward basic and acidic residues. N6-methyllysine is present on K30. H37 serves as a coordination point for Zn(2+).

It depends on [3Fe-4S] cluster as a cofactor. The cofactor is [4Fe-4S] cluster. Zn(2+) is required as a cofactor.

Functionally, ferredoxins are iron-sulfur proteins that transfer electrons in a wide variety of metabolic reactions. This chain is Zinc-containing ferredoxin (zfx), found in Metallosphaera prunae.